A 109-amino-acid chain; its full sequence is Latartoxin-2a (109 aa).

The N-terminal stretch at 1 to 19 (MKVLVIIALCLVAFQSALS) is a signal peptide. Residues 20–37 (KKIENFESYIEDLKSEAR) constitute a propeptide, removed in mature form. Positions 34–37 (SEAR) match the Processing quadruplet motif motif. Cystine bridges form between C39/C56, C46/C67, C55/C81, C69/C79, and C72/C93. A Valine amide modification is found at V108.

The protein belongs to the neurotoxin 19 (CSTX) family. 11 (latartoxin) subfamily. In terms of processing, contains 5 disulfide bonds. Cleavage of the propeptide depends on the processing quadruplet motif (XXXR, with at least one of X being E). Expressed by the venom gland.

The protein resides in the secreted. Its function is as follows. Insect toxin. Causes paralysis in larvae of C.vicina by depolarizing membranes at the neuromuscular junction. The protein is Latartoxin-2a of Lachesana tarabaevi (Spider).